We begin with the raw amino-acid sequence, 829 residues long: Periplasmic nitrate reductase (829 aa).

Residues Met1 to Ala30 constitute a signal peptide (tat-type signal). The 4Fe-4S Mo/W bis-MGD-type domain maps to Ile41 to Asp97. 4 residues coordinate [4Fe-4S] cluster: Cys48, Cys51, Cys55, and Cys83. Mo-bis(molybdopterin guanine dinucleotide)-binding positions include Lys85, Gln152, Asn177, Cys181, Trp214 to Met221, Ser245 to His249, Gln264 to Asp266, Met374, Gln378, Asn484, Ser510 to Asp511, Lys533, Asp560, and Thr719 to Thr728. Substrate is bound at residue Phe795. Positions 803 and 820 each coordinate Mo-bis(molybdopterin guanine dinucleotide).

This sequence belongs to the prokaryotic molybdopterin-containing oxidoreductase family. NasA/NapA/NarB subfamily. As to quaternary structure, component of the periplasmic nitrate reductase NapAB complex composed of NapA and NapB. It depends on [4Fe-4S] cluster as a cofactor. Mo-bis(molybdopterin guanine dinucleotide) serves as cofactor. Post-translationally, predicted to be exported by the Tat system. The position of the signal peptide cleavage has not been experimentally proven.

It is found in the periplasm. The catalysed reaction is 2 Fe(II)-[cytochrome] + nitrate + 2 H(+) = 2 Fe(III)-[cytochrome] + nitrite + H2O. In terms of biological role, catalytic subunit of the periplasmic nitrate reductase complex NapAB. Receives electrons from NapB and catalyzes the reduction of nitrate to nitrite. The protein is Periplasmic nitrate reductase of Aeromonas salmonicida (strain A449).